Reading from the N-terminus, the 260-residue chain is Ribonuclease HII (260 aa).

In terms of domain architecture, RNase H type-2 spans 71-259 (ELVAGVDEVG…VHDAIVNKKN (189 aa)). 3 residues coordinate a divalent metal cation: aspartate 77, glutamate 78, and aspartate 169.

The protein belongs to the RNase HII family. Requires Mn(2+) as cofactor. It depends on Mg(2+) as a cofactor.

The protein localises to the cytoplasm. The enzyme catalyses Endonucleolytic cleavage to 5'-phosphomonoester.. Functionally, endonuclease that specifically degrades the RNA of RNA-DNA hybrids. The protein is Ribonuclease HII of Leuconostoc citreum (strain KM20).